The following is a 165-amino-acid chain: P2Y purinoceptor 4 (165 aa).

Residues 1 to 16 form a helical membrane-spanning segment; that stretch reads SDTLYVLSLPTLVYYY. The Extracellular segment spans residues 17-30; sequence AARNHWPFGTGFCK. Residues 31-51 traverse the membrane as a helical segment; that stretch reads FVRFLFYWNLYCSVLFLTCIS. Over 52–74 the chain is Cytoplasmic; sequence VHRYMGICHPLRALRWGRPRFAS. Residues 75 to 95 traverse the membrane as a helical segment; sequence LLCLAVWLVVAGCLVPNLFFV. The Extracellular segment spans residues 96–124; sequence TTSPNGTTILCHDTTRPEEFDHYVHFSSA. An N-linked (GlcNAc...) asparagine glycan is attached at N100. A helical membrane pass occupies residues 125 to 145; sequence VMVLLFGLPFLVTLVCYGLMA. Residues 146-165 are Cytoplasmic-facing; it reads RRLYRPLPGAGQSSSRLRSL.

It belongs to the G-protein coupled receptor 1 family.

It localises to the cell membrane. Receptor for UTP and UDP coupled to G-proteins that activate a phosphatidylinositol-calcium second messenger system. The chain is P2Y purinoceptor 4 (P2RY4) from Cricetulus griseus (Chinese hamster).